The primary structure comprises 74 residues: MNRFVIQLIQLYKRLLSPLLPPACRFTPTCSEYAAQAFQEYGFFRALQLSIWRILRCNPLSRGFDDPLPPNTKG.

This sequence belongs to the UPF0161 family.

It is found in the cell inner membrane. Its function is as follows. Could be involved in insertion of integral membrane proteins into the membrane. This Leptospira interrogans serogroup Icterohaemorrhagiae serovar copenhageni (strain Fiocruz L1-130) protein is Putative membrane protein insertion efficiency factor.